The following is a 458-amino-acid chain: Sphingoid long chain base kinase 4 (458 aa).

Residues 103-241 enclose the DAGKc domain; that stretch reads KRSRRFIVFI…FDLMTFEQKG (139 aa). ATP is bound by residues 113–115 and threonine 145; that span reads NPH. 170 to 173 contributes to the substrate binding site; sequence GGDG. Aspartate 172 functions as the Proton donor/acceptor in the catalytic mechanism. ATP is bound by residues glutamate 177, 202–204, arginine 266, arginine 272, and 426–428; these read GSG and DGE.

The protein localises to the cell membrane. The protein resides in the endoplasmic reticulum membrane. It localises to the late endosome membrane. Its subcellular location is the golgi apparatus membrane. The catalysed reaction is a sphingoid base + ATP = a sphingoid 1-phosphate + ADP + H(+). Functionally, catalyzes the phosphorylation of the sphingoid long chain bases dihydrosphingosine (DHS) and phytosphingosine (PHS) to form dihydrosphingosine 1-phosphate (DHS-1P) and phytosphingosine 1-phosphate (PHS-1P) respectively. Involved in the biosynthesis of sphingolipids and ceramides. Involved in heat-induced transient cell cycle arrest. Accumulation of phosphorylated sphingoid long chain bases (LCBPs) stimulates calcium influx and activates calcineurin signaling. Involved in heat-stress resistance. This is Sphingoid long chain base kinase 4 (lcb4) from Schizosaccharomyces pombe (strain 972 / ATCC 24843) (Fission yeast).